The following is a 318-amino-acid chain: ADP-L-glycero-D-manno-heptose-6-epimerase (318 aa).

Residues 10-11 (FI), 31-32 (DD), lysine 38, lysine 53, 80-84 (EGACS), and asparagine 97 contribute to the NADP(+) site. Tyrosine 144 (proton acceptor) is an active-site residue. Lysine 148 serves as a coordination point for NADP(+). Asparagine 173 provides a ligand contact to substrate. Residues valine 174 and lysine 182 each coordinate NADP(+). Lysine 182 acts as the Proton acceptor in catalysis. Substrate-binding positions include lysine 184, histidine 191, 205–208 (FGAW), arginine 218, and tyrosine 282.

The protein belongs to the NAD(P)-dependent epimerase/dehydratase family. HldD subfamily. As to quaternary structure, homopentamer. The cofactor is NADP(+).

It catalyses the reaction ADP-D-glycero-beta-D-manno-heptose = ADP-L-glycero-beta-D-manno-heptose. It participates in nucleotide-sugar biosynthesis; ADP-L-glycero-beta-D-manno-heptose biosynthesis; ADP-L-glycero-beta-D-manno-heptose from D-glycero-beta-D-manno-heptose 7-phosphate: step 4/4. Functionally, catalyzes the interconversion between ADP-D-glycero-beta-D-manno-heptose and ADP-L-glycero-beta-D-manno-heptose via an epimerization at carbon 6 of the heptose. The chain is ADP-L-glycero-D-manno-heptose-6-epimerase from Chromohalobacter salexigens (strain ATCC BAA-138 / DSM 3043 / CIP 106854 / NCIMB 13768 / 1H11).